Here is a 131-residue protein sequence, read N- to C-terminus: Small ribosomal subunit protein uS8 (131 aa).

It belongs to the universal ribosomal protein uS8 family. Part of the 30S ribosomal subunit. Contacts proteins S5 and S12.

Its function is as follows. One of the primary rRNA binding proteins, it binds directly to 16S rRNA central domain where it helps coordinate assembly of the platform of the 30S subunit. This chain is Small ribosomal subunit protein uS8, found in Paracidovorax citrulli (strain AAC00-1) (Acidovorax citrulli).